The following is an 836-amino-acid chain: Hypoxia-inducible factor 1-alpha (836 aa).

The tract at residues 1–30 (MEGAGGENEKKKMSSERRKEKSRDAARSRR) is disordered. Residues 1 to 401 (MEGAGGENEK…KEPDALTLLA (401 aa)) are interaction with TSGA10. Residues 7–30 (ENEKKKMSSERRKEKSRDAARSRR) show a composition bias toward basic and acidic residues. One can recognise a bHLH domain in the interval 17-70 (RRKEKSRDAARSRRSKESEVFYELAHQLPLPHNVSSHLDKASVMRLTISYLRVR). The DNA-binding stretch occupies residues 21 to 30 (KSRDAARSRR). Residues 80 to 155 (SEDEMKAQMD…EMLTHRNGPV (76 aa)) enclose the PAS 1 domain. The required for heterodimer formation with ARNT stretch occupies residues 170–191 (RMKCTLTSRGRTMNIKSATWKV). Residues 228–298 (PHPSNIEIPL…KTHHDMFTKG (71 aa)) form the PAS 2 domain. The residue at position 247 (serine 247) is a Phosphoserine; by CK1. A PAC domain is found at 302–345 (TGQYRMLAKRGGYVWVETQATVIYNTKNSQPQCIVCVNYVVSGI). Residues 380-417 (SEDTSCLFDKLKKEPDALTLLAPAAGDTIISLDFGSDD) form an N-terminal VHL recognition site region. Lysine 391 is covalently cross-linked (Glycyl lysine isopeptide (Lys-Gly) (interchain with G-Cter in SUMO)). The ODD stretch occupies residues 401–613 (APAAGDTIIS…PSMSTVTGFQ (213 aa)). Proline 402 is modified (4-hydroxyproline). Lysine 476 participates in a covalent cross-link: Glycyl lysine isopeptide (Lys-Gly) (interchain with G-Cter in SUMO). The disordered stretch occupies residues 492-511 (QIQDQPASPSDGSTRQSSPE). The tract at residues 544–588 (FKLELVEKLFAEDTEAKNPFSTQDTDLDLEMLAPYIPMDDDFQLR) is NTAD. Lysine 545 carries the post-translational modification N6-acetyllysine; alternate. Glycyl lysine isopeptide (Lys-Gly) (interchain with G-Cter in ubiquitin) cross-links involve residues lysine 545, lysine 551, and lysine 560. Lysine 545 is covalently cross-linked (Glycyl lysine isopeptide (Lys-Gly) (interchain with G-Cter in ubiquitin); alternate). Serine 564 carries the post-translational modification Phosphoserine; by GSK3-beta. The residue at position 568 (threonine 568) is a Phosphothreonine; by GSK3-beta. Positions 569–585 (DLDLEMLAPYIPMDDDF) are C-terminal VHL recognition site. Proline 577 carries the 4-hydroxyproline modification. The residue at position 589 (serine 589) is a Phosphoserine; by PLK3. Positions 589-795 (SFDQLSPLES…SDLACRLLGQ (207 aa)) are ID. Disordered stretches follow at residues 593–684 (LSPL…DRAG) and 707–734 (QRNTVPEEELNPKTIASQNAQRKRKMEH). The residue at position 602 (serine 602) is a Phosphoserine; by GSK3-beta. Polar residues predominate over residues 608–620 (TVTGFQQTQLQKP). The span at 621–632 (TITATATTTATT) shows a compositional bias: low complexity. Over residues 633 to 647 (DESKTETKDNKEDIK) the composition is skewed to basic and acidic residues. The segment covering 652–678 (SPSSTQVPQETTTAKASAYSGTHSRTA) has biased composition (polar residues). Phosphoserine; by PLK3 is present on serine 668. Lysine 719 is subject to N6-acetyllysine. Residues 728–731 (RKRK) carry the Nuclear localization signal motif. The interval 796 to 836 (SMDESGLPQLTSYDCEVNAPIQGSRNLLQGEELLRALDQVN) is CTAD. An S-nitrosocysteine modification is found at cysteine 810. Asparagine 813 carries the (3S)-3-hydroxyasparagine modification.

As to quaternary structure, interacts with the ARNT; forms a heterodimer that binds core DNA sequence 5'-TACGTG-3' within the hypoxia response element (HRE) of target gene promoters. Interacts with COPS5; the interaction increases the transcriptional activity of HIF1A through increased stability. Interacts with EP300 (via TAZ-type 1 domains); the interaction is stimulated in response to hypoxia and inhibited by CITED2. Interacts with CREBBP (via TAZ-type 1 domains). Interacts with NCOA1, NCOA2, APEX1 and HSP90. Interacts (hydroxylated within the ODD domain) with VHLL (via beta domain); the interaction, leads to polyubiquitination and subsequent HIF1A proteasomal degradation. During hypoxia, sumoylated HIF1A also binds VHL; the interaction promotes the ubiquitination of HIF1A. Interacts with SENP1; the interaction desumoylates HIF1A resulting in stabilization and activation of transcription. Interacts (via the ODD domain) with NAA10; the interaction appears not to acetylate HIF1A nor have any affect on protein stability, during hypoxia. Interacts with RWDD3; the interaction enhances HIF1A sumoylation. Interacts with TSGA10. Interacts with HIF3A. Interacts with RORA (via the DNA binding domain); the interaction enhances HIF1A transcription under hypoxia through increasing protein stability. Interaction with PSMA7 inhibits the transactivation activity of HIF1A under both normoxic and hypoxia-mimicking conditions. Interacts with USP20. Interacts with RACK1; promotes HIF1A ubiquitination and proteasome-mediated degradation. Interacts (via N-terminus) with USP19. Interacts with SIRT2. Interacts (deacetylated form) with EGLN1. Interacts with CBFA2T3. Interacts with HSP90AA1 and HSP90AB1. Interacts with DCUN1D1; this interaction increases the interaction between VHL and DCUN1D1. Interacts with HIF1AN. S-nitrosylation of Cys-810 may be responsible for increased recruitment of p300 coactivator necessary for transcriptional activity of HIF-1 complex. In terms of processing, requires phosphorylation for DNA-binding. Phosphorylation at Ser-247 by CSNK1D/CK1 represses kinase activity and impairs ARNT binding. Phosphorylation by GSK3-beta and PLK3 promote degradation by the proteasome. Post-translationally, sumoylated; with SUMO1 under hypoxia. Sumoylation is enhanced through interaction with RWDD3. Both sumoylation and desumoylation seem to be involved in the regulation of its stability during hypoxia. Sumoylation can promote either its stabilization or its VHL-dependent degradation by promoting hydroxyproline-independent HIF1A-VHL complex binding, thus leading to HIF1A ubiquitination and proteasomal degradation. Desumoylation by SENP1 increases its stability amd transcriptional activity. There is a disaccord between various publications on the effect of sumoylation and desumoylation on its stability and transcriptional activity. Acetylation of Lys-545 by ARD1 increases interaction with VHL and stimulates subsequent proteasomal degradation. Deacetylation of Lys-719 by SIRT2 increases its interaction with and hydroxylation by EGLN1 thereby inactivating HIF1A activity by inducing its proteasomal degradation. In terms of processing, ubiquitinated; in normoxia, following hydroxylation and interaction with VHL. Lys-545 appears to be the principal site of ubiquitination. Clioquinol, the Cu/Zn-chelator, inhibits ubiquitination through preventing hydroxylation at Asn-813. Ubiquitinated by E3 ligase VHL. Deubiquitinated by UCHL1. Post-translationally, the iron and 2-oxoglutarate dependent 3-hydroxylation of asparagine is (S) stereospecific within HIF CTAD domains. In normoxia, is hydroxylated on Pro-402 and Pro-577 in the oxygen-dependent degradation domain (ODD) by EGLN1/PHD2 and EGLN2/PHD1. EGLN3/PHD3 has also been shown to hydroxylate Pro-577. The hydroxylated prolines promote interaction with VHL, initiating rapid ubiquitination and subsequent proteasomal degradation. Deubiquitinated by USP20. Under hypoxia, proline hydroxylation is impaired and ubiquitination is attenuated, resulting in stabilization. In normoxia, is hydroxylated on Asn-813 by HIF1AN, thus abrogating interaction with CREBBP and EP300 and preventing transcriptional activation. Repressed by iron ion, via Fe(2+) prolyl hydroxylase (PHD) enzymes-mediated hydroxylation and subsequent proteasomal degradation. In terms of tissue distribution, ubiquitous.

Its subcellular location is the cytoplasm. The protein resides in the nucleus. The protein localises to the nucleus speckle. Induced by reactive oxygen species (ROS). Its function is as follows. Functions as a master transcriptional regulator of the adaptive response to hypoxia. Under hypoxic conditions, activates the transcription of over 40 genes, including erythropoietin, glucose transporters, glycolytic enzymes, vascular endothelial growth factor, HILPDA, and other genes whose protein products increase oxygen delivery or facilitate metabolic adaptation to hypoxia. Plays an essential role in embryonic vascularization, tumor angiogenesis and pathophysiology of ischemic disease. Heterodimerizes with ARNT; heterodimer binds to core DNA sequence 5'-TACGTG-3' within the hypoxia response element (HRE) of target gene promoters. Activation requires recruitment of transcriptional coactivators such as CREBBP and EP300. Activity is enhanced by interaction with NCOA1 and/or NCOA2. Interaction with redox regulatory protein APEX1 seems to activate CTAD and potentiates activation by NCOA1 and CREBBP. Involved in the axonal distribution and transport of mitochondria in neurons during hypoxia. The protein is Hypoxia-inducible factor 1-alpha (Hif1a) of Mus musculus (Mouse).